The chain runs to 1259 residues: Cingulin (1259 aa).

Residues 9–324 are head; sequence MADQPIPVGQ…EKFPSLQAQP (316 aa). Positions 41-55 match the ZIM motif; it reads QDSYGVAVRVQGIDG. The span at 69–79 shows a compositional bias: basic and acidic residues; the sequence is SSYDYDRHYSE. Disordered stretches follow at residues 69-151, 169-232, 317-338, 941-969, and 1192-1259; these read SSYD…IDTK, VRGR…RQSL, FPSL…KKEL, KSRR…NSSR, and REME…TSSC. A compositionally biased stretch (polar residues) spans 80–100; sequence RSSTLDTAYSQSSRESAWSRG. Residues 117–127 show a composition bias toward low complexity; sequence SATSQQSTSAS. Polar residues predominate over residues 128–145; the sequence is NKTNKNGLSTSSFSNQSS. Basic and acidic residues predominate over residues 179-204; sequence ALKDERKRSQSLDGRKNYQDTADSRE. Over residues 220–229 the composition is skewed to polar residues; the sequence is VSSANRSFAR. Residues 325-1218 are a coiled coil; it reads GEDTRSLGSQ…KTMEKESKRK (894 aa). A compositionally biased stretch (basic and acidic residues) spans 326-338; the sequence is EDTRSLGSQKKEL. Residues 1220–1259 form a tail region; the sequence is IRPAHNDDDDLSSDGEYGGSYDPSSITSLLTESNLQTSSC. Positions 1241–1259 are enriched in polar residues; sequence DPSSITSLLTESNLQTSSC.

This sequence belongs to the cingulin family. In terms of assembly, parallel homodimer. Interacts with TJP1/ZO1 and TJP2/ZO2.

It localises to the cell junction. It is found in the tight junction. Probably plays a role in the formation and regulation of the tight junction (TJ) paracellular permeability barrier, possibly by linking ZO proteins to the actomyosin cytoskeleton. This chain is Cingulin, found in Xenopus tropicalis (Western clawed frog).